The sequence spans 284 residues: 2-dehydro-3-deoxyphosphooctonate aldolase (284 aa).

Belongs to the KdsA family.

It localises to the cytoplasm. The catalysed reaction is D-arabinose 5-phosphate + phosphoenolpyruvate + H2O = 3-deoxy-alpha-D-manno-2-octulosonate-8-phosphate + phosphate. Its pathway is carbohydrate biosynthesis; 3-deoxy-D-manno-octulosonate biosynthesis; 3-deoxy-D-manno-octulosonate from D-ribulose 5-phosphate: step 2/3. The protein operates within bacterial outer membrane biogenesis; lipopolysaccharide biosynthesis. This Vibrio vulnificus (strain CMCP6) protein is 2-dehydro-3-deoxyphosphooctonate aldolase.